Here is a 507-residue protein sequence, read N- to C-terminus: ATP synthase subunit alpha (507 aa).

168–175 (GDRKTGKT) serves as a coordination point for ATP.

This sequence belongs to the ATPase alpha/beta chains family. In terms of assembly, F-type ATPases have 2 components, CF(1) - the catalytic core - and CF(0) - the membrane proton channel. CF(1) has five subunits: alpha(3), beta(3), gamma(1), delta(1), epsilon(1). CF(0) has three main subunits: a(1), b(2) and c(9-12). The alpha and beta chains form an alternating ring which encloses part of the gamma chain. CF(1) is attached to CF(0) by a central stalk formed by the gamma and epsilon chains, while a peripheral stalk is formed by the delta and b chains.

It localises to the cell inner membrane. The catalysed reaction is ATP + H2O + 4 H(+)(in) = ADP + phosphate + 5 H(+)(out). In terms of biological role, produces ATP from ADP in the presence of a proton gradient across the membrane. The alpha chain is a regulatory subunit. The chain is ATP synthase subunit alpha from Ehrlichia ruminantium (strain Gardel).